The primary structure comprises 143 residues: Putative pre-16S rRNA nuclease (143 aa).

Belongs to the YqgF nuclease family.

It is found in the cytoplasm. Functionally, could be a nuclease involved in processing of the 5'-end of pre-16S rRNA. This chain is Putative pre-16S rRNA nuclease, found in Mesomycoplasma hyopneumoniae (strain 232) (Mycoplasma hyopneumoniae).